The sequence spans 440 residues: Proline--tRNA ligase (440 aa).

The protein belongs to the class-II aminoacyl-tRNA synthetase family. ProS type 2 subfamily. In terms of assembly, homodimer.

It is found in the cytoplasm. It carries out the reaction tRNA(Pro) + L-proline + ATP = L-prolyl-tRNA(Pro) + AMP + diphosphate. Its function is as follows. Catalyzes the attachment of proline to tRNA(Pro) in a two-step reaction: proline is first activated by ATP to form Pro-AMP and then transferred to the acceptor end of tRNA(Pro). The chain is Proline--tRNA ligase from Azorhizobium caulinodans (strain ATCC 43989 / DSM 5975 / JCM 20966 / LMG 6465 / NBRC 14845 / NCIMB 13405 / ORS 571).